The sequence spans 159 residues: MRCPFCAHDNSQVKDSRPSEDNTSIRRRRQCEGCGARFTTFERVQLREVVVVKSGERREPFDRSKIEQSVALACRKRPVNQERLDQLVSGIQRQIETMGDAEVASKVIGEMVMEGLRQLDSVAYIRFASVYRDFTEARDFEEFASSVQEMSVHEVSGGE.

The segment at 1–26 (MRCPFCAHDNSQVKDSRPSEDNTSIR) is disordered. Residues 3–34 (CPFCAHDNSQVKDSRPSEDNTSIRRRRQCEGC) fold into a zinc finger. Residues 11–24 (SQVKDSRPSEDNTS) are compositionally biased toward basic and acidic residues. The 91-residue stretch at 49–139 (VVVVKSGERR…VYRDFTEARD (91 aa)) folds into the ATP-cone domain.

It belongs to the NrdR family. Zn(2+) is required as a cofactor.

Its function is as follows. Negatively regulates transcription of bacterial ribonucleotide reductase nrd genes and operons by binding to NrdR-boxes. This chain is Transcriptional repressor NrdR, found in Novosphingobium aromaticivorans (strain ATCC 700278 / DSM 12444 / CCUG 56034 / CIP 105152 / NBRC 16084 / F199).